A 67-amino-acid polypeptide reads, in one-letter code: Beta-defensin 103 (67 aa).

The first 22 residues, 1-22 (MRIHYLLFALLFLFLVPVPGHG), serve as a signal peptide directing secretion. Disulfide bonds link C33/C62, C40/C55, and C45/C63.

Highly expressed in skin and tonsils, and to a lesser extent in trachea, uterus, kidney, thymus, adenoid, pharynx and tongue. Low expression in salivary gland, bone marrow, colon, stomach, polyp and larynx. No expression in small intestine.

The protein localises to the secreted. Its function is as follows. Exhibits antimicrobial activity against Gram-positive bacteria S.aureus and S.pyogenes, Gram-negative bacteria P.aeruginosa and E.coli and the yeast C.albicans. Kills multiresistant S.aureus and vancomycin-resistant E.faecium. No significant hemolytic activity was observed. In Homo sapiens (Human), this protein is Beta-defensin 103 (DEFB103A).